Consider the following 120-residue polypeptide: Aspartate 1-decarboxylase (120 aa).

The Schiff-base intermediate with substrate; via pyruvic acid role is filled by serine 25. Serine 25 is subject to Pyruvic acid (Ser). Threonine 57 contacts substrate. Tyrosine 58 acts as the Proton donor in catalysis. Position 73–75 (glycine 73–alanine 75) interacts with substrate.

It belongs to the PanD family. In terms of assembly, heterooctamer of four alpha and four beta subunits. The cofactor is pyruvate. Post-translationally, is synthesized initially as an inactive proenzyme, which is activated by self-cleavage at a specific serine bond to produce a beta-subunit with a hydroxyl group at its C-terminus and an alpha-subunit with a pyruvoyl group at its N-terminus.

Its subcellular location is the cytoplasm. It carries out the reaction L-aspartate + H(+) = beta-alanine + CO2. The protein operates within cofactor biosynthesis; (R)-pantothenate biosynthesis; beta-alanine from L-aspartate: step 1/1. Its function is as follows. Catalyzes the pyruvoyl-dependent decarboxylation of aspartate to produce beta-alanine. This Methylibium petroleiphilum (strain ATCC BAA-1232 / LMG 22953 / PM1) protein is Aspartate 1-decarboxylase.